Consider the following 129-residue polypeptide: Large ribosomal subunit protein uL22 (129 aa).

The protein belongs to the universal ribosomal protein uL22 family. As to quaternary structure, part of the 50S ribosomal subunit.

This protein binds specifically to 23S rRNA; its binding is stimulated by other ribosomal proteins, e.g. L4, L17, and L20. It is important during the early stages of 50S assembly. It makes multiple contacts with different domains of the 23S rRNA in the assembled 50S subunit and ribosome. Functionally, the globular domain of the protein is located near the polypeptide exit tunnel on the outside of the subunit, while an extended beta-hairpin is found that lines the wall of the exit tunnel in the center of the 70S ribosome. In Agrobacterium fabrum (strain C58 / ATCC 33970) (Agrobacterium tumefaciens (strain C58)), this protein is Large ribosomal subunit protein uL22.